Here is a 380-residue protein sequence, read N- to C-terminus: Cytochrome b (380 aa).

The next 4 helical transmembrane spans lie at 33 to 53 (FGSL…FLAM), 77 to 98 (WLIR…YLHV), 113 to 133 (WNIG…GYVL), and 178 to 198 (FFAF…LHLL). Heme b-binding residues include His-83 and His-97. Heme b is bound by residues His-182 and His-196. Residue His-201 participates in a ubiquinone binding. Helical transmembrane passes span 226–246 (YKDL…ALFS), 288–308 (LGGV…PLLH), 320–340 (LTQI…WIGG), and 347–367 (FITV…IFIP).

Belongs to the cytochrome b family. As to quaternary structure, the cytochrome bc1 complex contains 3 respiratory subunits (MT-CYB, CYC1 and UQCRFS1), 2 core proteins (UQCRC1 and UQCRC2) and probably 6 low-molecular weight proteins. Heme b is required as a cofactor.

It localises to the mitochondrion inner membrane. Its function is as follows. Component of the ubiquinol-cytochrome c reductase complex (complex III or cytochrome b-c1 complex) that is part of the mitochondrial respiratory chain. The b-c1 complex mediates electron transfer from ubiquinol to cytochrome c. Contributes to the generation of a proton gradient across the mitochondrial membrane that is then used for ATP synthesis. The protein is Cytochrome b (mt-cyb) of Neocyttus rhomboidalis (Spiky oreo dory).